A 299-amino-acid polypeptide reads, in one-letter code: Acetylglutamate kinase (299 aa).

Substrate-binding positions include 70–71 (GG), R92, and N186.

The protein belongs to the acetylglutamate kinase family. ArgB subfamily.

Its subcellular location is the cytoplasm. It catalyses the reaction N-acetyl-L-glutamate + ATP = N-acetyl-L-glutamyl 5-phosphate + ADP. It participates in amino-acid biosynthesis; L-arginine biosynthesis; N(2)-acetyl-L-ornithine from L-glutamate: step 2/4. Its function is as follows. Catalyzes the ATP-dependent phosphorylation of N-acetyl-L-glutamate. This is Acetylglutamate kinase from Caldanaerobacter subterraneus subsp. tengcongensis (strain DSM 15242 / JCM 11007 / NBRC 100824 / MB4) (Thermoanaerobacter tengcongensis).